The chain runs to 422 residues: Serine--tRNA ligase (422 aa).

Residue Thr-231–Glu-233 participates in L-serine binding. Arg-261–Glu-263 contacts ATP. An L-serine-binding site is contributed by Glu-284. Glu-348–Ser-351 provides a ligand contact to ATP. Residue Ser-383 participates in L-serine binding.

It belongs to the class-II aminoacyl-tRNA synthetase family. Type-1 seryl-tRNA synthetase subfamily. As to quaternary structure, homodimer. The tRNA molecule binds across the dimer.

The protein resides in the cytoplasm. It carries out the reaction tRNA(Ser) + L-serine + ATP = L-seryl-tRNA(Ser) + AMP + diphosphate + H(+). The enzyme catalyses tRNA(Sec) + L-serine + ATP = L-seryl-tRNA(Sec) + AMP + diphosphate + H(+). It functions in the pathway aminoacyl-tRNA biosynthesis; selenocysteinyl-tRNA(Sec) biosynthesis; L-seryl-tRNA(Sec) from L-serine and tRNA(Sec): step 1/1. In terms of biological role, catalyzes the attachment of serine to tRNA(Ser). Is also able to aminoacylate tRNA(Sec) with serine, to form the misacylated tRNA L-seryl-tRNA(Sec), which will be further converted into selenocysteinyl-tRNA(Sec). The sequence is that of Serine--tRNA ligase from Mycoplasmopsis agalactiae (strain NCTC 10123 / CIP 59.7 / PG2) (Mycoplasma agalactiae).